The primary structure comprises 863 residues: Leucine--tRNA ligase (863 aa).

The short motif at 42 to 52 is the 'HIGH' region element; the sequence is PYPSGRLHMGH. The 'KMSKS' region motif lies at 622 to 626; it reads KMSKS. Lys-625 contributes to the ATP binding site.

This sequence belongs to the class-I aminoacyl-tRNA synthetase family.

The protein resides in the cytoplasm. It carries out the reaction tRNA(Leu) + L-leucine + ATP = L-leucyl-tRNA(Leu) + AMP + diphosphate. This Shewanella denitrificans (strain OS217 / ATCC BAA-1090 / DSM 15013) protein is Leucine--tRNA ligase.